The following is a 308-amino-acid chain: Mitochondrial import receptor subunit TOM40B (308 aa).

A disordered region spans residues 1–29 (MGNTLGLAPMGTLPRRSPRREEPLPNPGS). Residues 281–308 (PLPVTLALGAFLNHWRNRFHCGFSITVG) are required for mitochondrial targeting.

This sequence belongs to the Tom40 family. In terms of assembly, forms part of the preprotein translocase of the outer mitochondrial membrane (TOM complex) containing TOMM22, TOMM40, TOMM40L and TOMM70. Interacts with mitochondrial targeting sequences.

The protein resides in the mitochondrion outer membrane. Functionally, potential channel-forming protein implicated in import of protein precursors into mitochondria. This chain is Mitochondrial import receptor subunit TOM40B (TOMM40L), found in Homo sapiens (Human).